The chain runs to 174 residues: MASLSVSSSSTIIDSRAPPSRLASASASSPSCISLPTLPIQSHTRAAKATAYCRKIVRNVVTRATTEVGEAPATTTEAETTELPEIVKTAQEAWEKVDDKYAIGSLAFAGVVALWGSAGMISAIDRLPLVPGVLELVGIGYTGWFTYKNLVFKPDREALFEKVKSTYKDILGSS.

The segment at 1 to 20 (MASLSVSSSSTIIDSRAPPS) is disordered. Residues 1 to 63 (MASLSVSSSS…RKIVRNVVTR (63 aa)) constitute a chloroplast transit peptide. An N-acetylalanine modification is found at Ala64. Residues 64 to 100 (ATTEVGEAPATTTEAETTELPEIVKTAQEAWEKVDDK) are Stromal-facing. The helical transmembrane segment at 101–121 (YAIGSLAFAGVVALWGSAGMI) threads the bilayer. Residues 122-126 (SAIDR) lie on the Lumenal side of the membrane. The helical transmembrane segment at 127-147 (LPLVPGVLELVGIGYTGWFTY) threads the bilayer. Over 148–174 (KNLVFKPDREALFEKVKSTYKDILGSS) the chain is Stromal.

Belongs to the CURT family. In terms of assembly, homo- and heterodimers and trimers. Interacts with PSAL. Post-translationally, phosphorylated on either Thr-65 or Thr-66 by a threonine specific thylakoid kinase.

Its subcellular location is the plastid. It is found in the chloroplast thylakoid membrane. Functionally, determines thylakoid architecture by inducing membrane curvature. The polypeptide is Protein CURVATURE THYLAKOID 1B, chloroplastic (CURT1B) (Arabidopsis thaliana (Mouse-ear cress)).